Reading from the N-terminus, the 607-residue chain is Polyadenylate-binding protein 1-like (607 aa).

RRM domains are found at residues 11–89 (SSLY…WSHR), 99–175 (GNIF…HFKS), 191–268 (TNIY…RAQK), and 294–370 (VNLY…LAQR). Residues 523-600 (HQPLTVSMLA…AVAVLQVHRE (78 aa)) enclose the PABC domain.

Belongs to the polyadenylate-binding protein type-1 family. In terms of tissue distribution, expressed in ovary and testis.

It localises to the cytoplasm. Poly(A)-binding protein involved in oocyte maturation and early embryo development. It is required for cytosolic mRNA polyadenylation and translational activation of maternally stored mRNA in oocytes. This Mus musculus (Mouse) protein is Polyadenylate-binding protein 1-like.